The following is a 190-amino-acid chain: Fe/S biogenesis protein NfuA (190 aa).

[4Fe-4S] cluster contacts are provided by C148 and C151.

This sequence belongs to the NfuA family. In terms of assembly, homodimer. [4Fe-4S] cluster is required as a cofactor.

In terms of biological role, involved in iron-sulfur cluster biogenesis. Binds a 4Fe-4S cluster, can transfer this cluster to apoproteins, and thereby intervenes in the maturation of Fe/S proteins. Could also act as a scaffold/chaperone for damaged Fe/S proteins. The sequence is that of Fe/S biogenesis protein NfuA from Baumannia cicadellinicola subsp. Homalodisca coagulata.